The following is a 743-amino-acid chain: Ectonucleotide pyrophosphatase/phosphodiesterase C27A7.3 (743 aa).

Over 1 to 23 the chain is Cytoplasmic; the sequence is MSNRVVDVNSKKTGTSWKKKLMK. Residues 24 to 44 form a helical; Signal-anchor for type II membrane protein membrane-spanning segment; that stretch reads IVIWSLAMLSFIAGLVLLGLV. Topologically, residues 45–743 are lumenal; the sequence is AAATISGSKN…LRRNITTSLW (699 aa). Residues Asp87 and Thr123 each contribute to the Zn(2+) site. Catalysis depends on Thr123, which acts as the Nucleophile. N-linked (GlcNAc...) asparagine glycosylation occurs at Asn195. Zn(2+) contacts are provided by Asp243, His247, Asp286, and His287. N-linked (GlcNAc...) asparagine glycans are attached at residues Asn293 and Asn320. A Zn(2+)-binding site is contributed by His383. N-linked (GlcNAc...) asparagine glycans are attached at residues Asn406, Asn434, and Asn536. Asp635, Asn637, Asp639, Ile641, and Asp643 together coordinate Ca(2+). Residue Asn737 is glycosylated (N-linked (GlcNAc...) asparagine).

This sequence belongs to the nucleotide pyrophosphatase/phosphodiesterase family. Requires Zn(2+) as cofactor. It depends on Ca(2+) as a cofactor.

The protein resides in the membrane. Functionally, probable phosphodiesterase. This Caenorhabditis elegans protein is Ectonucleotide pyrophosphatase/phosphodiesterase C27A7.3.